The following is a 511-amino-acid chain: 2-isopropylmalate synthase (511 aa).

The 263-residue stretch at 5 to 267 (IQIFDTTLRD…ESQINLEETK (263 aa)) folds into the Pyruvate carboxyltransferase domain. 4 residues coordinate Mn(2+): D14, H202, H204, and N238. Residues 391 to 511 (QLDNLQLQYV…EYELKEGIRT (121 aa)) form a regulatory domain region.

It belongs to the alpha-IPM synthase/homocitrate synthase family. LeuA type 1 subfamily. As to quaternary structure, homodimer. It depends on Mn(2+) as a cofactor.

It is found in the cytoplasm. It catalyses the reaction 3-methyl-2-oxobutanoate + acetyl-CoA + H2O = (2S)-2-isopropylmalate + CoA + H(+). It participates in amino-acid biosynthesis; L-leucine biosynthesis; L-leucine from 3-methyl-2-oxobutanoate: step 1/4. Functionally, catalyzes the condensation of the acetyl group of acetyl-CoA with 3-methyl-2-oxobutanoate (2-ketoisovalerate) to form 3-carboxy-3-hydroxy-4-methylpentanoate (2-isopropylmalate). This Staphylococcus epidermidis (strain ATCC 35984 / DSM 28319 / BCRC 17069 / CCUG 31568 / BM 3577 / RP62A) protein is 2-isopropylmalate synthase.